A 235-amino-acid chain; its full sequence is NifU-like protein 2, chloroplastic (235 aa).

A chloroplast-targeting transit peptide spans 1-16 (MQLLTLNPAAISRTPP).

This sequence belongs to the NifU family. In terms of assembly, homodimer; disulfide-linked. The cofactor is [2Fe-2S] cluster. Predominantly expressed in leaves and floral stalks. Ubiquitous (at protein level).

The protein resides in the plastid. The protein localises to the chloroplast stroma. In terms of biological role, molecular scaffold for [Fe-S] cluster assembly of chloroplastic iron-sulfur proteins. Required for biogenesis of ferredoxin, a major photosynthetic electron carrier containing [2Fe-2S] cluster. Required for the assembly of photosystem I complex. The chain is NifU-like protein 2, chloroplastic (NIFU2) from Arabidopsis thaliana (Mouse-ear cress).